The sequence spans 316 residues: Mitochondrial distribution and morphology protein 12 (316 aa).

In terms of domain architecture, SMP-LTD spans 1 to 312 (MSIDLEWNGL…FPNFHTLVLG (312 aa)).

This sequence belongs to the MDM12 family. Component of the ER-mitochondria encounter structure (ERMES) or MDM complex, composed of MMM1, MDM10, MDM12 and MDM34. An MMM1 homodimer associates with one molecule of MDM12 on each side in a pairwise head-to-tail manner, and the SMP-LTD domains of MMM1 and MDM12 generate a continuous hydrophobic tunnel for phospholipid trafficking.

The protein localises to the mitochondrion outer membrane. The protein resides in the endoplasmic reticulum membrane. Component of the ERMES/MDM complex, which serves as a molecular tether to connect the endoplasmic reticulum (ER) and mitochondria. Components of this complex are involved in the control of mitochondrial shape and protein biogenesis, and function in nonvesicular lipid trafficking between the ER and mitochondria. MDM12 is required for the interaction of the ER-resident membrane protein MMM1 and the outer mitochondrial membrane-resident beta-barrel protein MDM10. The MDM12-MMM1 subcomplex functions in the major beta-barrel assembly pathway that is responsible for biogenesis of all mitochondrial outer membrane beta-barrel proteins, and acts in a late step after the SAM complex. The MDM10-MDM12-MMM1 subcomplex further acts in the TOM40-specific pathway after the action of the MDM12-MMM1 complex. Essential for establishing and maintaining the structure of mitochondria and maintenance of mtDNA nucleoids. The sequence is that of Mitochondrial distribution and morphology protein 12 from Postia placenta (strain ATCC 44394 / Madison 698-R) (Brown rot fungus).